Here is a 137-residue protein sequence, read N- to C-terminus: Nucleoside diphosphate kinase (137 aa).

Lys-9, Phe-57, Arg-85, Thr-91, Arg-102, and Asn-112 together coordinate ATP. Catalysis depends on His-115, which acts as the Pros-phosphohistidine intermediate.

This sequence belongs to the NDK family. In terms of assembly, homotetramer. Requires Mg(2+) as cofactor.

It is found in the cytoplasm. It catalyses the reaction a 2'-deoxyribonucleoside 5'-diphosphate + ATP = a 2'-deoxyribonucleoside 5'-triphosphate + ADP. The catalysed reaction is a ribonucleoside 5'-diphosphate + ATP = a ribonucleoside 5'-triphosphate + ADP. Major role in the synthesis of nucleoside triphosphates other than ATP. The ATP gamma phosphate is transferred to the NDP beta phosphate via a ping-pong mechanism, using a phosphorylated active-site intermediate. This Sulfurovum sp. (strain NBC37-1) protein is Nucleoside diphosphate kinase.